We begin with the raw amino-acid sequence, 483 residues long: Glycogen synthase kinase-3 alpha (483 aa).

The span at 1–15 shows a compositional bias: gly residues; that stretch reads MSGGGPSGGGPGGSG. Residues 1 to 96 are disordered; it reads MSGGGPSGGG…PPPGVKLGRD (96 aa). Ser2 bears the N-acetylserine mark. Ser2 carries the phosphoserine modification. Ser21 bears the Phosphoserine; by PKB/AKT1 mark. Gly residues predominate over residues 25–82; sequence PGGGGGGGGGGPGGSASGPGGTGGGKASVGAMGGGVGASSSGGGPSGSGGGGSGGPGA. 3 positions are modified to phosphoserine: Ser72, Ser77, and Ser97. In terms of domain architecture, Protein kinase spans 119-403; sequence YTDIKVIGNG…PLEACAHSFF (285 aa). Residues 125 to 133 and Lys148 contribute to the ATP site; that span reads IGNGSFGVV. Asp244 functions as the Proton acceptor in the catalytic mechanism. Position 279 is a phosphotyrosine (Tyr279). Residues 443–483 are disordered; the sequence is PHLRSPSGPATLTSSSQALTETQTGQDWQAPDATPTLTNSS. Polar residues predominate over residues 450 to 469; the sequence is GPATLTSSSQALTETQTGQD.

This sequence belongs to the protein kinase superfamily. CMGC Ser/Thr protein kinase family. GSK-3 subfamily. Monomer. Interacts with ARRB2, AXIN1 and CTNNB1/beta-catenin. Interacts with CTNND2. Interacts with LMBR1L. Interacts with DDX3X. Interacts with TNFRSF10B. In terms of processing, phosphorylated by AKT1 at Ser-21: upon insulin-mediated signaling, the activated PKB/AKT1 protein kinase phosphorylates and deactivates GSK3A, resulting in the dephosphorylation and activation of GYS1. Activated by phosphorylation at Tyr-279.

The catalysed reaction is L-seryl-[tau protein] + ATP = O-phospho-L-seryl-[tau protein] + ADP + H(+). It carries out the reaction L-threonyl-[tau protein] + ATP = O-phospho-L-threonyl-[tau protein] + ADP + H(+). It catalyses the reaction L-seryl-[protein] + ATP = O-phospho-L-seryl-[protein] + ADP + H(+). The enzyme catalyses L-threonyl-[protein] + ATP = O-phospho-L-threonyl-[protein] + ADP + H(+). Activated by phosphorylation at Tyr-279. In response to insulin, inhibited by phosphorylation at Ser-21 by PKB/AKT1; phosphorylation at this site causes a conformational change, preventing access of substrates to the active site. Inhibited by lithium. Its function is as follows. Constitutively active protein kinase that acts as a negative regulator in the hormonal control of glucose homeostasis, Wnt signaling and regulation of transcription factors and microtubules, by phosphorylating and inactivating glycogen synthase (GYS1 or GYS2), CTNNB1/beta-catenin, APC and AXIN1. Requires primed phosphorylation of the majority of its substrates. Contributes to insulin regulation of glycogen synthesis by phosphorylating and inhibiting GYS1 activity and hence glycogen synthesis. Regulates glycogen metabolism in liver, but not in muscle. May also mediate the development of insulin resistance by regulating activation of transcription factors. In Wnt signaling, regulates the level and transcriptional activity of nuclear CTNNB1/beta-catenin. Facilitates amyloid precursor protein (APP) processing and the generation of APP-derived amyloid plaques found in Alzheimer disease. May be involved in the regulation of replication in pancreatic beta-cells. Is necessary for the establishment of neuronal polarity and axon outgrowth. Through phosphorylation of the anti-apoptotic protein MCL1, may control cell apoptosis in response to growth factors deprivation. Acts as a regulator of autophagy by mediating phosphorylation of KAT5/TIP60 under starvation conditions, activating KAT5/TIP60 acetyltransferase activity and promoting acetylation of key autophagy regulators, such as ULK1 and RUBCNL/Pacer. Negatively regulates extrinsic apoptotic signaling pathway via death domain receptors. Promotes the formation of an anti-apoptotic complex, made of DDX3X, BRIC2 and GSK3B, at death receptors, including TNFRSF10B. The anti-apoptotic function is most effective with weak apoptotic signals and can be overcome by stronger stimulation. The protein is Glycogen synthase kinase-3 alpha (Gsk3a) of Rattus norvegicus (Rat).